We begin with the raw amino-acid sequence, 115 residues long: DNA-directed RNA polymerase II subunit RPB11-b1 (115 aa).

It belongs to the archaeal Rpo11/eukaryotic RPB11/RPC19 RNA polymerase subunit family. Component of the RNA polymerase II (Pol II) complex consisting of 12 subunits. Ubiquitously expressed.

The protein resides in the nucleus. Its function is as follows. DNA-dependent RNA polymerase catalyzes the transcription of DNA into RNA using the four ribonucleoside triphosphates as substrates. Component of RNA polymerase II which synthesizes mRNA precursors and many functional non-coding RNAs. Pol II is the central component of the basal RNA polymerase II transcription machinery. It is composed of mobile elements that move relative to each other. RPB11 is part of the core element with the central large cleft. In Homo sapiens (Human), this protein is DNA-directed RNA polymerase II subunit RPB11-b1 (POLR2J2).